A 425-amino-acid chain; its full sequence is UPF0597 protein Moth_1414 (425 aa).

The protein belongs to the UPF0597 family.

This Moorella thermoacetica (strain ATCC 39073 / JCM 9320) protein is UPF0597 protein Moth_1414.